We begin with the raw amino-acid sequence, 213 residues long: NADH dehydrogenase [ubiquinone] iron-sulfur protein 7, mitochondrial (213 aa).

The transit peptide at 1–38 directs the protein to the mitochondrion; the sequence is MAALSAPGLCGFRILGLRSSVGTAVQARGVHQSVATDG. Positions 32-53 are disordered; it reads QSVATDGPSSTQPALPKARAVA. The segment covering 33 to 44 has biased composition (polar residues); the sequence is SVATDGPSSTQP. The [4Fe-4S] cluster site is built by Cys88 and Cys89. Arg111 is modified (hydroxyarginine). Residues Cys153 and Cys183 each contribute to the [4Fe-4S] cluster site.

This sequence belongs to the complex I 20 kDa subunit family. In terms of assembly, core subunit of respiratory chain NADH dehydrogenase (Complex I) which is composed of 45 different subunits. This is a component of the iron-sulfur (IP) fragment of the enzyme. Requires [4Fe-4S] cluster as cofactor. In terms of processing, hydroxylated ar Arg-111 by NDUFAF5 early in the pathway of assembly of complex I, before the formation of the juncture between peripheral and membrane arms.

The protein resides in the mitochondrion inner membrane. It catalyses the reaction a ubiquinone + NADH + 5 H(+)(in) = a ubiquinol + NAD(+) + 4 H(+)(out). Its function is as follows. Core subunit of the mitochondrial membrane respiratory chain NADH dehydrogenase (Complex I) which catalyzes electron transfer from NADH through the respiratory chain, using ubiquinone as an electron acceptor. Essential for the catalytic activity of complex I. The chain is NADH dehydrogenase [ubiquinone] iron-sulfur protein 7, mitochondrial (NDUFS7) from Gorilla gorilla gorilla (Western lowland gorilla).